Reading from the N-terminus, the 309-residue chain is Ribonuclease Z (309 aa).

Residues histidine 64, histidine 66, aspartate 68, histidine 69, histidine 141, aspartate 209, and histidine 267 each contribute to the Zn(2+) site. Aspartate 68 (proton acceptor) is an active-site residue.

It belongs to the RNase Z family. Homodimer. Zn(2+) serves as cofactor.

It catalyses the reaction Endonucleolytic cleavage of RNA, removing extra 3' nucleotides from tRNA precursor, generating 3' termini of tRNAs. A 3'-hydroxy group is left at the tRNA terminus and a 5'-phosphoryl group is left at the trailer molecule.. Functionally, zinc phosphodiesterase, which displays some tRNA 3'-processing endonuclease activity. Probably involved in tRNA maturation, by removing a 3'-trailer from precursor tRNA. This is Ribonuclease Z from Picrophilus torridus (strain ATCC 700027 / DSM 9790 / JCM 10055 / NBRC 100828 / KAW 2/3).